The primary structure comprises 289 residues: Acetyl-coenzyme A carboxylase carboxyl transferase subunit beta (289 aa).

The region spanning 28-289 is the CoA carboxyltransferase N-terminal domain; that stretch reads VMTKCPKCKK…QGGEMAVWQS (262 aa). Zn(2+) is bound by residues cysteine 32, cysteine 35, cysteine 51, and cysteine 54. The C4-type zinc finger occupies 32 to 54; sequence CPKCKKIMYTKEVLKNLKVCVNC.

The protein belongs to the AccD/PCCB family. In terms of assembly, acetyl-CoA carboxylase is a heterohexamer composed of biotin carboxyl carrier protein (AccB), biotin carboxylase (AccC) and two subunits each of ACCase subunit alpha (AccA) and ACCase subunit beta (AccD). Zn(2+) is required as a cofactor.

It is found in the cytoplasm. It catalyses the reaction N(6)-carboxybiotinyl-L-lysyl-[protein] + acetyl-CoA = N(6)-biotinyl-L-lysyl-[protein] + malonyl-CoA. It participates in lipid metabolism; malonyl-CoA biosynthesis; malonyl-CoA from acetyl-CoA: step 1/1. Component of the acetyl coenzyme A carboxylase (ACC) complex. Biotin carboxylase (BC) catalyzes the carboxylation of biotin on its carrier protein (BCCP) and then the CO(2) group is transferred by the transcarboxylase to acetyl-CoA to form malonyl-CoA. In Bacillus thuringiensis subsp. konkukian (strain 97-27), this protein is Acetyl-coenzyme A carboxylase carboxyl transferase subunit beta.